The following is a 732-amino-acid chain: Ribosomal RNA large subunit methyltransferase K/L (732 aa).

The region spanning Met50–Leu162 is the THUMP domain. A disordered region spans residues Thr396–Ala424.

The protein belongs to the methyltransferase superfamily. RlmKL family.

Its subcellular location is the cytoplasm. It catalyses the reaction guanosine(2445) in 23S rRNA + S-adenosyl-L-methionine = N(2)-methylguanosine(2445) in 23S rRNA + S-adenosyl-L-homocysteine + H(+). The catalysed reaction is guanosine(2069) in 23S rRNA + S-adenosyl-L-methionine = N(2)-methylguanosine(2069) in 23S rRNA + S-adenosyl-L-homocysteine + H(+). Its function is as follows. Specifically methylates the guanine in position 2445 (m2G2445) and the guanine in position 2069 (m7G2069) of 23S rRNA. In Chromohalobacter salexigens (strain ATCC BAA-138 / DSM 3043 / CIP 106854 / NCIMB 13768 / 1H11), this protein is Ribosomal RNA large subunit methyltransferase K/L.